The sequence spans 514 residues: Tumor necrosis factor receptor superfamily member EDAR (514 aa).

The signal sequence occupies residues 1–27 (MKMWKRRGQKKSMFLSSLLVCCMFASA). The Extracellular segment spans residues 28 to 183 (EYSSCGEYEF…SPGQGHLATA (156 aa)). TNFR-Cys repeat units lie at residues 31–72 (SCGE…GFAC), 74–114 (PCPQ…DAEC), and 116–149 (PCLP…TKEC). 7 cysteine pairs are disulfide-bonded: Cys32–Cys45, Cys48–Cys61, Cys51–Cys72, Cys75–Cys88, Cys94–Cys114, Cys117–Cys136, and Cys139–Cys149. Asn39 and Asn58 each carry an N-linked (GlcNAc...) asparagine glycan. The helical transmembrane segment at 184-204 (LIIAMSTIFIMAIAIVLIIMF) threads the bilayer. Topologically, residues 205–514 (YILKAKPNGQ…TSPSPRCASV (310 aa)) are cytoplasmic. The disordered stretch occupies residues 254-294 (LKASPQKTVKSENDASSENEQLLSRSIDSDEEPTSDKLRSS). Positions 267 to 279 (DASSENEQLLSRS) are enriched in polar residues. Residues 403 to 476 (RMLSSSYSSD…DAVESLCADV (74 aa)) form the Death domain.

It is found in the membrane. Receptor for EDA. May mediate the activation of NF-kappa-B and JNK. The chain is Tumor necrosis factor receptor superfamily member EDAR (edar) from Oryzias latipes (Japanese rice fish).